A 454-amino-acid polypeptide reads, in one-letter code: UDP-N-acetylmuramoylalanine--D-glutamate ligase (454 aa).

118–124 (GTNGKTT) contacts ATP.

The protein belongs to the MurCDEF family.

It is found in the cytoplasm. The catalysed reaction is UDP-N-acetyl-alpha-D-muramoyl-L-alanine + D-glutamate + ATP = UDP-N-acetyl-alpha-D-muramoyl-L-alanyl-D-glutamate + ADP + phosphate + H(+). The protein operates within cell wall biogenesis; peptidoglycan biosynthesis. Cell wall formation. Catalyzes the addition of glutamate to the nucleotide precursor UDP-N-acetylmuramoyl-L-alanine (UMA). The chain is UDP-N-acetylmuramoylalanine--D-glutamate ligase from Thermosynechococcus vestitus (strain NIES-2133 / IAM M-273 / BP-1).